The following is a 79-amino-acid chain: Putative membrane protein insertion efficiency factor (79 aa).

This sequence belongs to the UPF0161 family.

The protein localises to the cell inner membrane. Its function is as follows. Could be involved in insertion of integral membrane proteins into the membrane. This Bacteroides thetaiotaomicron (strain ATCC 29148 / DSM 2079 / JCM 5827 / CCUG 10774 / NCTC 10582 / VPI-5482 / E50) protein is Putative membrane protein insertion efficiency factor.